Consider the following 409-residue polypeptide: Pyrophosphate--fructose 6-phosphate 1-phosphotransferase (409 aa).

A diphosphate-binding site is contributed by Gly-14. Residue Asp-123 participates in Mg(2+) binding. Residues 151–153, 196–198, Glu-268, and 325–328 each bind substrate; these read TID, MGR, and YFAR. Catalysis depends on Asp-153, which acts as the Proton acceptor.

This sequence belongs to the phosphofructokinase type A (PFKA) family. PPi-dependent PFK group II subfamily. Clade 'P' sub-subfamily. In terms of assembly, homotetramer. Mg(2+) serves as cofactor.

Its subcellular location is the cytoplasm. It catalyses the reaction beta-D-fructose 6-phosphate + diphosphate = beta-D-fructose 1,6-bisphosphate + phosphate + H(+). The protein operates within carbohydrate degradation; glycolysis; D-glyceraldehyde 3-phosphate and glycerone phosphate from D-glucose: step 3/4. Non-allosteric. Its function is as follows. Catalyzes the phosphorylation of D-fructose 6-phosphate, the first committing step of glycolysis. Uses inorganic phosphate (PPi) as phosphoryl donor instead of ATP like common ATP-dependent phosphofructokinases (ATP-PFKs), which renders the reaction reversible, and can thus function both in glycolysis and gluconeogenesis. Consistently, PPi-PFK can replace the enzymes of both the forward (ATP-PFK) and reverse (fructose-bisphosphatase (FBPase)) reactions. This is Pyrophosphate--fructose 6-phosphate 1-phosphotransferase from Methylotuvimicrobium alcaliphilum (strain DSM 19304 / NCIMB 14124 / VKM B-2133 / 20Z) (Methylomicrobium alcaliphilum).